The following is a 144-amino-acid chain: Leghemoglobin-1 (144 aa).

The 143-residue stretch at 2–144 (GFTEKQEALV…DGLATAIKAA (143 aa)) folds into the Globin domain. Nitrated tyrosine occurs at positions 25 and 30. Residue Ser-45 coordinates heme b. A Phosphoserine modification is found at Ser-45. Position 62 (His-62) interacts with O2. Positions 65, 93, and 96 each coordinate heme b. Nitrated tyrosine is present on Tyr-134.

This sequence belongs to the plant globin family. Monomer. In terms of processing, nitrated in effective nodules and particularly in hypoxic conditions; this mechanism may play a protective role in the symbiosis by buffering toxic peroxynitrite NO(2)(-). Nitration level decrease during nodule senescence. Phosphorylation at Ser-45 disrupts the molecular environment of its porphyrin ring oxygen binding pocket, thus leading to a reduced oxygen consumption and to the delivery of oxygen O(2) to symbiosomes. In terms of tissue distribution, root nodules.

The protein localises to the cytoplasm. Its subcellular location is the cytosol. The protein resides in the nucleus. Leghemoglobin that reversibly binds oxygen O(2) through a pentacoordinated heme iron. In root nodules, facilitates the diffusion of oxygen to the bacteroids while preventing the bacterial nitrogenase from being inactivated by buffering dioxygen, nitric oxide and carbon monoxide, and promoting the formation of reactive oxygen species (ROS, e.g. H(2)O(2)). This role is essential for symbiotic nitrogen fixation (SNF). This is Leghemoglobin-1 from Vicia faba (Broad bean).